The chain runs to 253 residues: 5'/3'-nucleotidase SurE (253 aa).

Positions 8, 9, 39, and 92 each coordinate a divalent metal cation.

It belongs to the SurE nucleotidase family. Requires a divalent metal cation as cofactor.

It is found in the cytoplasm. The catalysed reaction is a ribonucleoside 5'-phosphate + H2O = a ribonucleoside + phosphate. It catalyses the reaction a ribonucleoside 3'-phosphate + H2O = a ribonucleoside + phosphate. The enzyme catalyses [phosphate](n) + H2O = [phosphate](n-1) + phosphate + H(+). Nucleotidase with a broad substrate specificity as it can dephosphorylate various ribo- and deoxyribonucleoside 5'-monophosphates and ribonucleoside 3'-monophosphates with highest affinity to 3'-AMP. Also hydrolyzes polyphosphate (exopolyphosphatase activity) with the preference for short-chain-length substrates (P20-25). Might be involved in the regulation of dNTP and NTP pools, and in the turnover of 3'-mononucleotides produced by numerous intracellular RNases (T1, T2, and F) during the degradation of various RNAs. This chain is 5'/3'-nucleotidase SurE, found in Escherichia coli O17:K52:H18 (strain UMN026 / ExPEC).